Reading from the N-terminus, the 355-residue chain is UDP-N-acetylglucosamine--N-acetylmuramyl-(pentapeptide) pyrophosphoryl-undecaprenol N-acetylglucosamine transferase (355 aa).

UDP-N-acetyl-alpha-D-glucosamine is bound by residues 15–17, Asn-127, Arg-163, Ser-191, Ile-244, 263–268, and Gln-288; these read TGG and ALTVSE.

The protein belongs to the glycosyltransferase 28 family. MurG subfamily.

The protein resides in the cell inner membrane. The enzyme catalyses di-trans,octa-cis-undecaprenyl diphospho-N-acetyl-alpha-D-muramoyl-L-alanyl-D-glutamyl-meso-2,6-diaminopimeloyl-D-alanyl-D-alanine + UDP-N-acetyl-alpha-D-glucosamine = di-trans,octa-cis-undecaprenyl diphospho-[N-acetyl-alpha-D-glucosaminyl-(1-&gt;4)]-N-acetyl-alpha-D-muramoyl-L-alanyl-D-glutamyl-meso-2,6-diaminopimeloyl-D-alanyl-D-alanine + UDP + H(+). It functions in the pathway cell wall biogenesis; peptidoglycan biosynthesis. Functionally, cell wall formation. Catalyzes the transfer of a GlcNAc subunit on undecaprenyl-pyrophosphoryl-MurNAc-pentapeptide (lipid intermediate I) to form undecaprenyl-pyrophosphoryl-MurNAc-(pentapeptide)GlcNAc (lipid intermediate II). This Salmonella dublin (strain CT_02021853) protein is UDP-N-acetylglucosamine--N-acetylmuramyl-(pentapeptide) pyrophosphoryl-undecaprenol N-acetylglucosamine transferase.